Consider the following 265-residue polypeptide: Taurine import ATP-binding protein TauB (265 aa).

The region spanning 7–236 (QNLNMIFKTP…MGIDGDLREI (230 aa)) is the ABC transporter domain. 41–48 (GPSGCGKT) contacts ATP.

This sequence belongs to the ABC transporter superfamily. Taurine importer (TC 3.A.1.17.1) family. The complex is composed of two ATP-binding proteins (TauB), two transmembrane proteins (TauC) and a solute-binding protein (TauA).

It localises to the cell inner membrane. It catalyses the reaction taurine(out) + ATP + H2O = taurine(in) + ADP + phosphate + H(+). Functionally, part of the ABC transporter complex TauABC involved in taurine import. Responsible for energy coupling to the transport system. The chain is Taurine import ATP-binding protein TauB from Pelagibacter ubique (strain HTCC1062).